The following is a 459-amino-acid chain: Cysteine--tRNA ligase (459 aa).

Residue C28 coordinates Zn(2+). Positions 30–40 match the 'HIGH' region motif; sequence VTIYDLCHIGH. The Zn(2+) site is built by C209, H234, and E238. The 'KMSKS' region motif lies at 266-270; sequence KMSKS. Residue K269 coordinates ATP.

The protein belongs to the class-I aminoacyl-tRNA synthetase family. In terms of assembly, monomer. Requires Zn(2+) as cofactor.

The protein resides in the cytoplasm. It carries out the reaction tRNA(Cys) + L-cysteine + ATP = L-cysteinyl-tRNA(Cys) + AMP + diphosphate. This Shewanella pealeana (strain ATCC 700345 / ANG-SQ1) protein is Cysteine--tRNA ligase.